A 127-amino-acid chain; its full sequence is Small ribosomal subunit protein uS12m (127 aa).

It belongs to the universal ribosomal protein uS12 family.

It is found in the mitochondrion. This is Small ribosomal subunit protein uS12m (RPS12) from Acanthamoeba castellanii (Amoeba).